The chain runs to 267 residues: 3-deoxy-manno-octulosonate cytidylyltransferase 2 (267 aa).

The protein belongs to the KdsB family.

It is found in the cytoplasm. The catalysed reaction is 3-deoxy-alpha-D-manno-oct-2-ulosonate + CTP = CMP-3-deoxy-beta-D-manno-octulosonate + diphosphate. It functions in the pathway nucleotide-sugar biosynthesis; CMP-3-deoxy-D-manno-octulosonate biosynthesis; CMP-3-deoxy-D-manno-octulosonate from 3-deoxy-D-manno-octulosonate and CTP: step 1/1. The protein operates within bacterial outer membrane biogenesis; lipopolysaccharide biosynthesis. Functionally, activates KDO (a required 8-carbon sugar) for incorporation into bacterial lipopolysaccharide in Gram-negative bacteria. This is 3-deoxy-manno-octulosonate cytidylyltransferase 2 from Burkholderia ambifaria (strain MC40-6).